A 405-amino-acid polypeptide reads, in one-letter code: Acetate kinase (405 aa).

Position 7 (Asn7) interacts with Mg(2+). Lys14 serves as a coordination point for ATP. A substrate-binding site is contributed by Arg92. Residue Asp149 is the Proton donor/acceptor of the active site. Residues 209 to 213 (HLGNG) and 284 to 286 (DMR) contribute to the ATP site. Glu389 serves as a coordination point for Mg(2+).

This sequence belongs to the acetokinase family. As to quaternary structure, homodimer. The cofactor is Mg(2+). It depends on Mn(2+) as a cofactor.

It is found in the cytoplasm. It carries out the reaction acetate + ATP = acetyl phosphate + ADP. Its pathway is metabolic intermediate biosynthesis; acetyl-CoA biosynthesis; acetyl-CoA from acetate: step 1/2. In terms of biological role, catalyzes the formation of acetyl phosphate from acetate and ATP. Can also catalyze the reverse reaction. This Borreliella burgdorferi (strain ZS7) (Borrelia burgdorferi) protein is Acetate kinase.